Reading from the N-terminus, the 380-residue chain is Cytochrome b (380 aa).

4 helical membrane passes run 34–54, 78–99, 114–134, and 179–199; these read FGSL…FLAM, WLLR…YCHI, WNVG…GYVL, and FFAF…IDLV. His-84 and His-98 together coordinate heme b. His-183 serves as a coordination point for heme b. His-202 is a binding site for a ubiquinone. The next 4 helical transmembrane spans lie at 227-247, 289-309, 321-341, and 348-369; these read TKDT…ALLF, LGGV…PLLN, LSQA…WIGS, and FVLI…GFPL.

It belongs to the cytochrome b family. In terms of assembly, the main subunits of complex b-c1 are: cytochrome b, cytochrome c1 and the Rieske protein. It depends on heme b as a cofactor.

Its subcellular location is the mitochondrion inner membrane. In terms of biological role, component of the ubiquinol-cytochrome c reductase complex (complex III or cytochrome b-c1 complex) that is part of the mitochondrial respiratory chain. The b-c1 complex mediates electron transfer from ubiquinol to cytochrome c. Contributes to the generation of a proton gradient across the mitochondrial membrane that is then used for ATP synthesis. This Paracentrotus lividus (Common sea urchin) protein is Cytochrome b (MT-CYB).